We begin with the raw amino-acid sequence, 161 residues long: Pupal cuticle protein C1B (161 aa).

9 consecutive repeat copies span residues 6 to 9 (AAPA), 14 to 17 (AAPA), 35 to 38 (AAPA), 87 to 90 (AAPV), 103 to 106 (AAPV), 112 to 115 (AAPV), 121 to 124 (AAPV), 130 to 133 (AAPV), and 143 to 146 (AAPA).

Component of the cuticle of the pupa of Tenebrio molitor. The chain is Pupal cuticle protein C1B from Tenebrio molitor (Yellow mealworm beetle).